The sequence spans 282 residues: UPF0759 protein YunF (282 aa).

It belongs to the UPF0759 family.

The sequence is that of UPF0759 protein YunF (yunF) from Bacillus subtilis (strain 168).